The primary structure comprises 262 residues: tRNA pseudouridine synthase A (262 aa).

Catalysis depends on Asp51, which acts as the Nucleophile. Tyr109 contacts substrate.

The protein belongs to the tRNA pseudouridine synthase TruA family. As to quaternary structure, homodimer.

The catalysed reaction is uridine(38/39/40) in tRNA = pseudouridine(38/39/40) in tRNA. Its function is as follows. Formation of pseudouridine at positions 38, 39 and 40 in the anticodon stem and loop of transfer RNAs. This chain is tRNA pseudouridine synthase A, found in Legionella pneumophila (strain Lens).